The primary structure comprises 463 residues: Mitochondrial dynamics protein MID49 (463 aa).

The Mitochondrial intermembrane segment spans residues 1–24; that stretch reads MAELQIRKKEKKSGDGIGTMVDFL. Residues 25–47 traverse the membrane as a helical segment; it reads LANARLVLGVGGAAMLGIATLAV. At 48 to 463 the chain is on the cytoplasmic side; it reads KRLIDRATSP…EPDDVLKRER (416 aa). Residues 87–119 form a disordered region; that stretch reads TLRRKEDLEHHCAPLSLPDPSQKMPEATGTSQV. A compositionally biased stretch (basic and acidic residues) spans 89-98; the sequence is RRKEDLEHHC.

This sequence belongs to the MID49/MID51 family.

It localises to the mitochondrion outer membrane. Functionally, mitochondrial outer membrane protein which regulates mitochondrial organization. It is required for mitochondrial fission and promotes the recruitment and association of the fission mediator dynamin-related protein 1 (DNM1L) to the mitochondrial surface independently of the mitochondrial fission FIS1 and MFF proteins. Regulates DNM1L GTPase activity. The polypeptide is Mitochondrial dynamics protein MID49 (mief2) (Xenopus laevis (African clawed frog)).